Here is a 618-residue protein sequence, read N- to C-terminus: Chaperone protein HtpG (618 aa).

The tract at residues 1–340 is a; substrate-binding; sequence MATKHQFQTE…SEDLPLNVSR (340 aa). The segment at 341–545 is b; that stretch reads EILQQNKILA…KEDNNPMMAN (205 aa). The segment at 546–618 is c; the sequence is LMAQMGQKVP…ELNSLLLQSL (73 aa).

This sequence belongs to the heat shock protein 90 family. In terms of assembly, homodimer.

It localises to the cytoplasm. Molecular chaperone. Has ATPase activity. This Helicobacter hepaticus (strain ATCC 51449 / 3B1) protein is Chaperone protein HtpG.